Reading from the N-terminus, the 284-residue chain is Asialoglycoprotein receptor 1 (284 aa).

Over 1–39 (MTKDYQDFQHLDNENDHHQLQRGPPPAPRLLQRLCSGFR) the chain is Cytoplasmic. Residues 5–8 (YQDF) carry the Endocytosis signal motif. Residue Cys35 is the site of S-palmitoyl cysteine attachment. The chain crosses the membrane as a helical; Signal-anchor for type II membrane protein span at residues 40 to 60 (LFLLSLGLSILLLVVVCVITS). Residues 58 to 122 (ITSQNSQLRE…EDLREDHSRL (65 aa)) are a coiled coil. Topologically, residues 61–284 (QNSQLREDLR…VCETELGKAN (224 aa)) are extracellular. N-linked (GlcNAc...) asparagine glycans are attached at residues Asn75, Asn78, and Asn146. 3 cysteine pairs are disulfide-bonded: Cys153/Cys164, Cys181/Cys276, and Cys254/Cys268. The C-type lectin domain maps to 160 to 277 (YEGSCYWFSS…CRRPYRWVCE (118 aa)). Ca(2+) is bound by residues Val190, Glu196, Asp215, Gln239, Asp241, Asp242, Glu252, Asp253, Asn264, Asp265, and Glu277.

As to quaternary structure, interacts with LASS2. In terms of processing, phosphorylated on a cytoplasmic Ser residue. Expressed exclusively in hepatic parenchymal cells.

The protein localises to the membrane. In terms of biological role, mediates the endocytosis of plasma glycoproteins to which the terminal sialic acid residue on their complex carbohydrate moieties has been removed. The receptor recognizes terminal galactose and N-acetylgalactosamine units. After ligand binding to the receptor, the resulting complex is internalized and transported to a sorting organelle, where receptor and ligand are disassociated. The receptor then returns to the cell membrane surface. The polypeptide is Asialoglycoprotein receptor 1 (Asgr1) (Rattus norvegicus (Rat)).